Here is a 217-residue protein sequence, read N- to C-terminus: Ribosomal RNA large subunit methyltransferase E (217 aa).

Positions 71, 73, 91, 107, and 132 each coordinate S-adenosyl-L-methionine. Catalysis depends on lysine 172, which acts as the Proton acceptor.

It belongs to the class I-like SAM-binding methyltransferase superfamily. RNA methyltransferase RlmE family.

It localises to the cytoplasm. The catalysed reaction is uridine(2552) in 23S rRNA + S-adenosyl-L-methionine = 2'-O-methyluridine(2552) in 23S rRNA + S-adenosyl-L-homocysteine + H(+). Its function is as follows. Specifically methylates the uridine in position 2552 of 23S rRNA at the 2'-O position of the ribose in the fully assembled 50S ribosomal subunit. The polypeptide is Ribosomal RNA large subunit methyltransferase E (Psychromonas ingrahamii (strain DSM 17664 / CCUG 51855 / 37)).